We begin with the raw amino-acid sequence, 233 residues long: 2-C-methyl-D-erythritol 4-phosphate cytidylyltransferase (233 aa).

This sequence belongs to the IspD/TarI cytidylyltransferase family. IspD subfamily.

The enzyme catalyses 2-C-methyl-D-erythritol 4-phosphate + CTP + H(+) = 4-CDP-2-C-methyl-D-erythritol + diphosphate. It functions in the pathway isoprenoid biosynthesis; isopentenyl diphosphate biosynthesis via DXP pathway; isopentenyl diphosphate from 1-deoxy-D-xylulose 5-phosphate: step 2/6. Its function is as follows. Catalyzes the formation of 4-diphosphocytidyl-2-C-methyl-D-erythritol from CTP and 2-C-methyl-D-erythritol 4-phosphate (MEP). The protein is 2-C-methyl-D-erythritol 4-phosphate cytidylyltransferase of Gloeobacter violaceus (strain ATCC 29082 / PCC 7421).